The sequence spans 118 residues: Large ribosomal subunit protein uL18 (118 aa).

It belongs to the universal ribosomal protein uL18 family. As to quaternary structure, part of the 50S ribosomal subunit; part of the 5S rRNA/L5/L18/L25 subcomplex. Contacts the 5S and 23S rRNAs.

In terms of biological role, this is one of the proteins that bind and probably mediate the attachment of the 5S RNA into the large ribosomal subunit, where it forms part of the central protuberance. This Campylobacter jejuni subsp. jejuni serotype O:2 (strain ATCC 700819 / NCTC 11168) protein is Large ribosomal subunit protein uL18.